The chain runs to 181 residues: RNA-binding protein (181 aa).

The disordered stretch occupies residues 106–181 (FLTSVNPGES…DANTRKSKRK (76 aa)). The span at 141–157 (RNSKKGAKKSSSARKKK) shows a compositional bias: basic residues. A compositionally biased stretch (low complexity) spans 160 to 172 (SSNSETDLSSDSD).

It belongs to the phytoreovirus RNA-binding protein family.

Its subcellular location is the host cytoplasm. Constituent of viral factories. Binds to ssRNA and dsRNA. This Rice dwarf virus (isolate Akita) (RDV) protein is RNA-binding protein.